The chain runs to 314 residues: MNVIKISPRGYCYGVVDAMVIAKNAALDKSLPRPIYILGMIVHNKHVTDAFEKEGIYTLDGPNRLEILNQVDKGTVIFTAHGVSPEVRKIAEDKGLVAIDATCPDVTKTHDLIRKMKAEGYHVIYIGKKGHPEPEGAVGVAPDIVHLVETEEDVERLDIEAEKLIVTNQTTMSQWDVHDIMEKVKEKYPDVEFHQEICLATQVRQEAVSEQAKKADLTIVVGDPKSNNSNRLAQVSEEIAGTKAYRIGDLSELKLEWLDGVETVAVTAGASTPTPITKEVIRFLEQFDHEDPSTWKISHEVPLHKILPKVKAKT.

C12 lines the [4Fe-4S] cluster pocket. The (2E)-4-hydroxy-3-methylbut-2-enyl diphosphate site is built by H43 and H81. Residues H43 and H81 each contribute to the dimethylallyl diphosphate site. H43 and H81 together coordinate isopentenyl diphosphate. [4Fe-4S] cluster is bound at residue C103. H131 is a binding site for (2E)-4-hydroxy-3-methylbut-2-enyl diphosphate. H131 lines the dimethylallyl diphosphate pocket. Isopentenyl diphosphate is bound at residue H131. Catalysis depends on E133, which acts as the Proton donor. T170 provides a ligand contact to (2E)-4-hydroxy-3-methylbut-2-enyl diphosphate. C198 is a binding site for [4Fe-4S] cluster. (2E)-4-hydroxy-3-methylbut-2-enyl diphosphate-binding residues include S226, N228, and S271. Positions 226, 228, and 271 each coordinate dimethylallyl diphosphate. S226, N228, and S271 together coordinate isopentenyl diphosphate.

The protein belongs to the IspH family. [4Fe-4S] cluster is required as a cofactor.

It catalyses the reaction isopentenyl diphosphate + 2 oxidized [2Fe-2S]-[ferredoxin] + H2O = (2E)-4-hydroxy-3-methylbut-2-enyl diphosphate + 2 reduced [2Fe-2S]-[ferredoxin] + 2 H(+). The enzyme catalyses dimethylallyl diphosphate + 2 oxidized [2Fe-2S]-[ferredoxin] + H2O = (2E)-4-hydroxy-3-methylbut-2-enyl diphosphate + 2 reduced [2Fe-2S]-[ferredoxin] + 2 H(+). Its pathway is isoprenoid biosynthesis; dimethylallyl diphosphate biosynthesis; dimethylallyl diphosphate from (2E)-4-hydroxy-3-methylbutenyl diphosphate: step 1/1. The protein operates within isoprenoid biosynthesis; isopentenyl diphosphate biosynthesis via DXP pathway; isopentenyl diphosphate from 1-deoxy-D-xylulose 5-phosphate: step 6/6. In terms of biological role, catalyzes the conversion of 1-hydroxy-2-methyl-2-(E)-butenyl 4-diphosphate (HMBPP) into a mixture of isopentenyl diphosphate (IPP) and dimethylallyl diphosphate (DMAPP). Acts in the terminal step of the DOXP/MEP pathway for isoprenoid precursor biosynthesis. This Bacillus licheniformis (strain ATCC 14580 / DSM 13 / JCM 2505 / CCUG 7422 / NBRC 12200 / NCIMB 9375 / NCTC 10341 / NRRL NRS-1264 / Gibson 46) protein is 4-hydroxy-3-methylbut-2-enyl diphosphate reductase.